The chain runs to 434 residues: UDP-N-acetylglucosamine 1-carboxyvinyltransferase (434 aa).

K22 to N23 is a phosphoenolpyruvate binding site. R99 is a binding site for UDP-N-acetyl-alpha-D-glucosamine. The Proton donor role is filled by C123. C123 is subject to 2-(S-cysteinyl)pyruvic acid O-phosphothioketal. UDP-N-acetyl-alpha-D-glucosamine is bound by residues R128–Q132, D317, and I339.

This sequence belongs to the EPSP synthase family. MurA subfamily.

The protein localises to the cytoplasm. The catalysed reaction is phosphoenolpyruvate + UDP-N-acetyl-alpha-D-glucosamine = UDP-N-acetyl-3-O-(1-carboxyvinyl)-alpha-D-glucosamine + phosphate. It participates in cell wall biogenesis; peptidoglycan biosynthesis. Cell wall formation. Adds enolpyruvyl to UDP-N-acetylglucosamine. The polypeptide is UDP-N-acetylglucosamine 1-carboxyvinyltransferase (Paracidovorax citrulli (strain AAC00-1) (Acidovorax citrulli)).